Consider the following 457-residue polypeptide: Cysteine--tRNA ligase (457 aa).

Cys-31 provides a ligand contact to Zn(2+). A 'HIGH' region motif is present at residues 33-43 (PTVYNYAHIGN). Residues Cys-211, His-236, and Glu-240 each contribute to the Zn(2+) site. The 'KMSKS' region signature appears at 269 to 273 (KMSKS). Residue Lys-272 participates in ATP binding.

Belongs to the class-I aminoacyl-tRNA synthetase family. In terms of assembly, monomer. It depends on Zn(2+) as a cofactor.

The protein resides in the cytoplasm. The catalysed reaction is tRNA(Cys) + L-cysteine + ATP = L-cysteinyl-tRNA(Cys) + AMP + diphosphate. The sequence is that of Cysteine--tRNA ligase from Xanthomonas campestris pv. campestris (strain ATCC 33913 / DSM 3586 / NCPPB 528 / LMG 568 / P 25).